A 436-amino-acid polypeptide reads, in one-letter code: GTPase Der (436 aa).

EngA-type G domains lie at 4–167 (PVVA…KNIP) and 176–351 (VQFC…ENHS). GTP is bound by residues 10 to 17 (GRPNVGKS), 57 to 61 (DTGGI), 119 to 122 (NKLD), 182 to 189 (GRPNVGKS), 229 to 233 (DTAGM), and 294 to 297 (NKWD). The 85-residue stretch at 352–436 (LRVQTNVLND…PIKIFARARK (85 aa)) folds into the KH-like domain.

Belongs to the TRAFAC class TrmE-Era-EngA-EngB-Septin-like GTPase superfamily. EngA (Der) GTPase family. In terms of assembly, associates with the 50S ribosomal subunit.

GTPase that plays an essential role in the late steps of ribosome biogenesis. In Bacillus velezensis (strain DSM 23117 / BGSC 10A6 / LMG 26770 / FZB42) (Bacillus amyloliquefaciens subsp. plantarum), this protein is GTPase Der.